The following is a 420-amino-acid chain: Glutamyl-tRNA reductase (420 aa).

Substrate is bound by residues 49–52 (TCNR), S107, 112–114 (EPQ), and Q118. The active-site Nucleophile is C50. Residue 187–192 (GAGETI) coordinates NADP(+).

It belongs to the glutamyl-tRNA reductase family. Homodimer.

The catalysed reaction is (S)-4-amino-5-oxopentanoate + tRNA(Glu) + NADP(+) = L-glutamyl-tRNA(Glu) + NADPH + H(+). The protein operates within porphyrin-containing compound metabolism; protoporphyrin-IX biosynthesis; 5-aminolevulinate from L-glutamyl-tRNA(Glu): step 1/2. Its function is as follows. Catalyzes the NADPH-dependent reduction of glutamyl-tRNA(Glu) to glutamate 1-semialdehyde (GSA). This chain is Glutamyl-tRNA reductase, found in Nitrosococcus oceani (strain ATCC 19707 / BCRC 17464 / JCM 30415 / NCIMB 11848 / C-107).